We begin with the raw amino-acid sequence, 137 residues long: Nucleoside diphosphate kinase (137 aa).

6 residues coordinate ATP: Lys-9, Phe-57, Arg-85, Thr-91, Arg-102, and Asn-112. The active-site Pros-phosphohistidine intermediate is His-115.

Belongs to the NDK family. In terms of assembly, homotetramer. The cofactor is Mg(2+).

The protein localises to the cytoplasm. It catalyses the reaction a 2'-deoxyribonucleoside 5'-diphosphate + ATP = a 2'-deoxyribonucleoside 5'-triphosphate + ADP. It carries out the reaction a ribonucleoside 5'-diphosphate + ATP = a ribonucleoside 5'-triphosphate + ADP. Functionally, major role in the synthesis of nucleoside triphosphates other than ATP. The ATP gamma phosphate is transferred to the NDP beta phosphate via a ping-pong mechanism, using a phosphorylated active-site intermediate. This chain is Nucleoside diphosphate kinase, found in Campylobacter jejuni subsp. jejuni serotype O:2 (strain ATCC 700819 / NCTC 11168).